The chain runs to 171 residues: UPF0763 protein HPSH_03535 (171 aa).

This sequence belongs to the UPF0763 family.

This is UPF0763 protein HPSH_03535 from Helicobacter pylori (strain Shi470).